Reading from the N-terminus, the 143-residue chain is NADH-quinone oxidoreductase subunit A (143 aa).

The next 3 membrane-spanning stretches (helical) occupy residues 7-27 (GFGN…GGYL), 63-83 (FYVV…LYPW), and 93-113 (FALF…AYAW).

The protein belongs to the complex I subunit 3 family. As to quaternary structure, NDH-1 is composed of 14 different subunits. Subunits NuoA, H, J, K, L, M, N constitute the membrane sector of the complex.

The protein resides in the cell inner membrane. The catalysed reaction is a quinone + NADH + 5 H(+)(in) = a quinol + NAD(+) + 4 H(+)(out). Functionally, NDH-1 shuttles electrons from NADH, via FMN and iron-sulfur (Fe-S) centers, to quinones in the respiratory chain. The immediate electron acceptor for the enzyme in this species is believed to be a menaquinone. Couples the redox reaction to proton translocation (for every two electrons transferred, four hydrogen ions are translocated across the cytoplasmic membrane), and thus conserves the redox energy in a proton gradient. This is NADH-quinone oxidoreductase subunit A from Chlorobium limicola (strain DSM 245 / NBRC 103803 / 6330).